Reading from the N-terminus, the 356-residue chain is MITKQQVLEFLKNYDLENITIATVCSHSSLQIFDGARKEGFRTLGICVGKPPKFYEAFPKAKPDEYLIVDSYSDIMNKVEELRKKNVIIIPHGSFVAYLGTENFAELTVPTFGNRAVLEWESDRDKEREWLLGAGIHMPGKIDDPRDINGPVMVKYDGAKGGKGFFVAKTYEEFDELVDRTQKYTIQEFITGTRYYLHYFYSPIRNEGYTLSEGSLELLSMDRRVESNADEIFRLGSPRELIEAGIRPTYVVTGNVPLVARESLLPLIFSLGERVVEESLGLFGGMIGAFCLETVFTDSLEIKVFEISARIVAGTNLYISGSPYADLIQEDLSTGRRIAQEIKEAVRTNQLDKIIS.

5-amino-1-(5-phospho-beta-D-ribosyl)imidazole-4-carboxamide contacts are provided by His27 and Ser94. An ATP-grasp domain is found at 101-333 (TENFAELTVP…YADLIQEDLS (233 aa)). Residues 145–196 (PRDI…TRYY) and Glu226 contribute to the ATP site. Asn255 serves as a coordination point for 5-amino-1-(5-phospho-beta-D-ribosyl)imidazole-4-carboxamide. Glu293 and Glu306 together coordinate Mg(2+).

Belongs to the phosphohexose mutase family. Mg(2+) serves as cofactor. It depends on Mn(2+) as a cofactor.

It catalyses the reaction 5-amino-1-(5-phospho-beta-D-ribosyl)imidazole-4-carboxamide + formate + ATP = 5-formamido-1-(5-phospho-D-ribosyl)imidazole-4-carboxamide + ADP + phosphate. The protein operates within purine metabolism; IMP biosynthesis via de novo pathway; 5-formamido-1-(5-phospho-D-ribosyl)imidazole-4-carboxamide from 5-amino-1-(5-phospho-D-ribosyl)imidazole-4-carboxamide (formate route): step 1/1. Its function is as follows. Catalyzes the ATP- and formate-dependent formylation of 5-aminoimidazole-4-carboxamide-1-beta-d-ribofuranosyl 5'-monophosphate (AICAR) to 5-formaminoimidazole-4-carboxamide-1-beta-d-ribofuranosyl 5'-monophosphate (FAICAR) in the absence of folates. This is 5-formaminoimidazole-4-carboxamide-1-(beta)-D-ribofuranosyl 5'-monophosphate synthetase from Methanosarcina acetivorans (strain ATCC 35395 / DSM 2834 / JCM 12185 / C2A).